A 983-amino-acid polypeptide reads, in one-letter code: MAGEDPYIMGVSDPQMFAMDQLMGMSTIFNNTGYITSDLPLRTADGPYLQIIEQPKQRGFRFRYVCEGPSHGGLPGASSEKNKKSYPQVKICNYVGPAKVIVQLVTNGKYVHLHAHSLVGKFCEDGVCTVNAGPKDMVVGFANLGILHVTKKKVFETLETRMIDACKKGYNPGLLVHPELGYLQAEGCGDRQLTEREREIIRQAAVQQTKEMDLSVVRLMFTAFLPDSNGGFTRRLDPVISDAIYDSKAPNASNLKIVRMDRTAGCVTGGEEIYLLCDKVQKDDIQIRFYEEDENGGMWEGFGDFSPTDVHRQFAIVFKTPKYRDVNITKPASVFVQLRRKSDLETSEPKPFLYYPEIKDKEEVQRKRQKLMPNFSDGYGGGSGAGGGGMFGGGGGGAGSGFSYPSYGYSAFGGMHFHPGTTKSNAGMKHELSNSTVKKDEESSDKQSDKWDTKHDVKVETVEKNECRTSGHNEEKEDASLCCKDEGNKPKCGCQDGLFLEKAMQLAKRHCNALFDYAVTGDVRMLLAVQRHLTAVQDDNGDNVLHLSIIHLHRELVKNLLEVMPDMNYNNIINMRNDLYQTPLHLAVITKQAEVVEDLLKAGANVNLLDRHGNSVLHLAAAEGDDKILSLLLKHQKASSMIDLSNGEGLSAIHMVVTANSLSCLKLLIAAGVDVNAQEQKSGRTALHLAVEQENVPLAGCLLLEGDADVDSTTYDGTTPLHIAAGRGFTKLAAVLKAAGADPHVENFEPLFDVEEDVKDDDDDEGIVPGTTPLDMAANWEVYDILNGKPYIAAAAVSEDLLSQGPLRELNESSKQQLYKLLETPDPSKNWSTLAEKLGLGILNNAFRLSPSPSKTLLDNYKISGGTVQELIAALTQMDHTEAIEVIQKALSSSQRQSHQEDNTIEAFPSLSPTSFAKEETGELYNHKFQDPESTCDSGVETSFRKLSFTYSDSLNSKSSITLSKMTLGYRKAQCKAVIYLTR.

The RHD domain maps to Pro47 to Met372. Cys66 carries the S-nitrosocysteine modification. Ser342 carries the phosphoserine; by PKA modification. The Nuclear localization signal motif lies at Gln365–Lys370. The tract at residues Asp377–Gly397 is GRR. Positions Lys423 to Lys454 are disordered. The span at Met428–Lys454 shows a compositional bias: basic and acidic residues. 7 ANK repeats span residues Asn540–Tyr569, Leu579–Leu608, His612–Met641, Glu648–Ala677, Ser682–Ser712, Asp716–Val745, and Pro769–Glu799. The Death domain maps to Gln804 to Leu891. A Phosphoserine modification is found at Ser938.

Active NF-kappa-B is a heterodimer of an about 50 kDa DNA-binding subunit and the weak DNA-binding subunit p65. Two heterodimers might form a labile tetramer. Generation of the NF-kappa-B p50 (Nuclear factor NF-kappa-B p50 subunit) transcription factor takes place both cotranslationally and post-translationally via non-mutually exclusive mechanisms. A cotranslational processing allows the production of both p50 and p105 (Nuclear factor NF-kappa-B p105 subunit) from a single NFKB1 mRNA. While translation occurs, the particular unfolded structure after the GRR repeat region acts as a substrate for the proteasome, promoting degradation of the C-terminus. The GRR acts as a proteasomal 'stop signal', protecting the region upstream of the GRR from degradation and promoting generation of p50. It is unclear if limited proteasome degradation during cotranslational processing depends on ubiquitination. NF-kappa-B p50 is also generated post-translationally following ubiquitination by the KPC complex, leading to limited processing by the proteasome downstream of the GRR region, thereby generating p50. Post-translationally, phosphorylation at the C-terminus by IKBKB/IKKB acts as a signal for ubiquitination and promotes either complete degradation or processing to generate the NF-kappa-B p50 (Nuclear factor NF-kappa-B p50 subunit). Phosphorylation at Ser-938 are required for BTRC/BTRCP-mediated ubiquitination and proteolysis. Phosphorylation at Ser-938 is also required for ubiquitination by the KPC complex and limited processing to generate NF-kappa-B p50 (Nuclear factor NF-kappa-B p50 subunit). In terms of processing, polyubiquitinated at multiple Lys residues in the C-terminus. Polyubiquitinated by the SCF(FBXW11) and SCF(BTRC) complexes following phosphorylation at Ser-938, leading to its complete degradation. In contrast, polyubiquitination by the KPC complex following phosphorylation at Ser-938 leads to limited proteosomal processing and generation of the active NF-kappa-B p50 (Nuclear factor NF-kappa-B p50 subunit). S-nitrosylation of Cys-66 affects DNA binding. Post-translationally, the covalent modification of cysteine by 15-deoxy-Delta12,14-prostaglandin-J2 is autocatalytic and reversible. It may occur as an alternative to other cysteine modifications, such as S-nitrosylation and S-palmitoylation.

The protein resides in the cytoplasm. Its subcellular location is the nucleus. Functionally, P105 is the precursor of the active p50 subunit (Nuclear factor NF-kappa-B p50 subunit) of the nuclear factor NF-kappa-B. The precursor protein itself does not bind to DNA. Acts as a cytoplasmic retention of attached NF-kappa-B proteins by p105. In terms of biological role, constitutes the active form, which associates with RELA/p65 to form the NF-kappa-B p65-p50 complex to form a transcription factor. Together with RELA/p65, binds to the kappa-B consensus sequence 5'-GGRNNYYCC-3', located in the enhancer region of genes involved in immune response and acute phase reactions. The chain is Nuclear factor NF-kappa-B p105 subunit (NFKB1) from Gallus gallus (Chicken).